The following is a 442-amino-acid chain: D-serine dehydratase (442 aa).

Lysine 118 is modified (N6-(pyridoxal phosphate)lysine).

This sequence belongs to the serine/threonine dehydratase family. DsdA subfamily. Monomer. It depends on pyridoxal 5'-phosphate as a cofactor.

It carries out the reaction D-serine = pyruvate + NH4(+). The sequence is that of D-serine dehydratase from Escherichia coli (strain K12 / MC4100 / BW2952).